Consider the following 87-residue polypeptide: Small ribosomal subunit protein uS17 (87 aa).

This sequence belongs to the universal ribosomal protein uS17 family. As to quaternary structure, part of the 30S ribosomal subunit.

Its function is as follows. One of the primary rRNA binding proteins, it binds specifically to the 5'-end of 16S ribosomal RNA. The chain is Small ribosomal subunit protein uS17 from Lacticaseibacillus casei (strain BL23) (Lactobacillus casei).